The chain runs to 219 residues: Orotate phosphoribosyltransferase (219 aa).

Position 26 (Lys26) interacts with 5-phospho-alpha-D-ribose 1-diphosphate. 34–35 provides a ligand contact to orotate; sequence FF. 5-phospho-alpha-D-ribose 1-diphosphate contacts are provided by residues 72–73, Arg98, Lys99, Lys102, His104, and 124–132; these read YK and DDVITAGTA. Positions 128 and 156 each coordinate orotate.

It belongs to the purine/pyrimidine phosphoribosyltransferase family. PyrE subfamily. In terms of assembly, homodimer. It depends on Mg(2+) as a cofactor.

It catalyses the reaction orotidine 5'-phosphate + diphosphate = orotate + 5-phospho-alpha-D-ribose 1-diphosphate. It functions in the pathway pyrimidine metabolism; UMP biosynthesis via de novo pathway; UMP from orotate: step 1/2. Its function is as follows. Catalyzes the transfer of a ribosyl phosphate group from 5-phosphoribose 1-diphosphate to orotate, leading to the formation of orotidine monophosphate (OMP). The protein is Orotate phosphoribosyltransferase of Xanthomonas euvesicatoria pv. vesicatoria (strain 85-10) (Xanthomonas campestris pv. vesicatoria).